The primary structure comprises 185 residues: MKIKEVIVVEGKDDTKRIQMAVNADTLETRGSAISDETLDQIEDLYDKRGVIVFTDPDFSGEKIRKIITEAIPGVKHAFLTKHDAAPSHKGSLGVEHASPEAIREALAHLYTEVPDGEPLISREDLAVAGLTSGPQAKEYRRRLGEYLRIGYTNGKQLYKRLKLFQITPDEFKKALEYIKNEDNY.

A Toprim domain is found at 4–87; it reads KEVIVVEGKD…AFLTKHDAAP (84 aa). Mg(2+) contacts are provided by Glu10, Asp56, and Asp58.

Belongs to the ribonuclease M5 family. The cofactor is Mg(2+).

It is found in the cytoplasm. It catalyses the reaction Endonucleolytic cleavage of RNA, removing 21 and 42 nucleotides, respectively, from the 5'- and 3'-termini of a 5S-rRNA precursor.. Required for correct processing of both the 5' and 3' ends of 5S rRNA precursor. Cleaves both sides of a double-stranded region yielding mature 5S rRNA in one step. This chain is Ribonuclease M5 1, found in Ligilactobacillus salivarius (strain UCC118) (Lactobacillus salivarius).